The sequence spans 76 residues: Exodeoxyribonuclease 7 small subunit (76 aa).

Belongs to the XseB family. As to quaternary structure, heterooligomer composed of large and small subunits.

It is found in the cytoplasm. It catalyses the reaction Exonucleolytic cleavage in either 5'- to 3'- or 3'- to 5'-direction to yield nucleoside 5'-phosphates.. Its function is as follows. Bidirectionally degrades single-stranded DNA into large acid-insoluble oligonucleotides, which are then degraded further into small acid-soluble oligonucleotides. In Gluconacetobacter diazotrophicus (strain ATCC 49037 / DSM 5601 / CCUG 37298 / CIP 103539 / LMG 7603 / PAl5), this protein is Exodeoxyribonuclease 7 small subunit.